Here is an 839-residue protein sequence, read N- to C-terminus: Putative AC9 transposase (839 aa).

Residues 32-43 (SSSNANGTATDP) show a composition bias toward polar residues. Residues 32–85 (SSSNANGTATDPSQDDMAIVHEPQPQPQPQPEPQPQPQPEPEEEAPQKRAKKCT) form a disordered region. Over residues 55 to 70 (QPQPQPQPEPQPQPQP) the composition is skewed to pro residues.

The polypeptide is Putative AC9 transposase (Zea mays (Maize)).